The sequence spans 301 residues: N-acetylmuramic acid 6-phosphate etherase (301 aa).

The region spanning 57-220 (VVERLRAGGR…STISMVRLGK (164 aa)) is the SIS domain. Residue Glu-85 is the Proton donor of the active site. The active site involves Glu-116.

The protein belongs to the GCKR-like family. MurNAc-6-P etherase subfamily. As to quaternary structure, homodimer.

It catalyses the reaction N-acetyl-D-muramate 6-phosphate + H2O = N-acetyl-D-glucosamine 6-phosphate + (R)-lactate. It functions in the pathway amino-sugar metabolism; N-acetylmuramate degradation. Its function is as follows. Specifically catalyzes the cleavage of the D-lactyl ether substituent of MurNAc 6-phosphate, producing GlcNAc 6-phosphate and D-lactate. The polypeptide is N-acetylmuramic acid 6-phosphate etherase (Rubrobacter xylanophilus (strain DSM 9941 / JCM 11954 / NBRC 16129 / PRD-1)).